Here is a 427-residue protein sequence, read N- to C-terminus: L-rhamnose isomerase (427 aa).

Residues H264, D296, and D298 each coordinate Mn(2+).

The protein belongs to the rhamnose isomerase family. Requires Mn(2+) as cofactor.

The protein resides in the cytoplasm. The enzyme catalyses L-rhamnopyranose = L-rhamnulose. It functions in the pathway carbohydrate degradation; L-rhamnose degradation; glycerone phosphate from L-rhamnose: step 1/3. Functionally, catalyzes the interconversion of L-rhamnose and L-rhamnulose. This Rhodopirellula baltica (strain DSM 10527 / NCIMB 13988 / SH1) protein is L-rhamnose isomerase.